The primary structure comprises 375 residues: Dual specificity protein phosphatase 4 (375 aa).

A Rhodanese domain is found at 25-143; sequence SGGRCLLLDC…FASEYPEFCA (119 aa). Positions 176–317 constitute a Tyrosine-protein phosphatase domain; sequence GPVEILPFLY…LLQFESQVLA (142 aa). The active-site Phosphocysteine intermediate is cysteine 261.

The protein belongs to the protein-tyrosine phosphatase family. Non-receptor class dual specificity subfamily.

The protein resides in the nucleus. It catalyses the reaction O-phospho-L-tyrosyl-[protein] + H2O = L-tyrosyl-[protein] + phosphate. The catalysed reaction is O-phospho-L-seryl-[protein] + H2O = L-seryl-[protein] + phosphate. The enzyme catalyses O-phospho-L-threonyl-[protein] + H2O = L-threonyl-[protein] + phosphate. In terms of biological role, regulates mitogenic signal transduction by dephosphorylating both Thr and Tyr residues on MAP kinases ERK1 and ERK2. This is Dual specificity protein phosphatase 4 (DUSP4) from Gallus gallus (Chicken).